A 148-amino-acid chain; its full sequence is 3-dehydroquinate dehydratase (148 aa).

Residue Tyr-24 is the Proton acceptor of the active site. 3 residues coordinate substrate: Asn-75, His-81, and Asp-88. His-101 acts as the Proton donor in catalysis. Residues Leu-102–Ser-103 and Arg-112 each bind substrate.

Belongs to the type-II 3-dehydroquinase family. As to quaternary structure, homododecamer.

The enzyme catalyses 3-dehydroquinate = 3-dehydroshikimate + H2O. It functions in the pathway metabolic intermediate biosynthesis; chorismate biosynthesis; chorismate from D-erythrose 4-phosphate and phosphoenolpyruvate: step 3/7. Functionally, catalyzes a trans-dehydration via an enolate intermediate. The protein is 3-dehydroquinate dehydratase of Rhizobium meliloti (strain 1021) (Ensifer meliloti).